Reading from the N-terminus, the 692-residue chain is Zinc finger protein 180 (692 aa).

Positions 72–145 (VNFKIVTVDF…GVKIERFTRD (74 aa)) constitute a KRAB domain. Residues K138, K159, K168, K191, K198, K226, K304, K313, and K330 each participate in a glycyl lysine isopeptide (Lys-Gly) (interchain with G-Cter in SUMO2) cross-link. 12 consecutive C2H2-type zinc fingers follow at residues 353–375 (FECNQCGKSFSWSSHLVAHQRTH), 381–403 (YECSECGKSFSRSSHLVSHQRTH), 409–431 (YRCNQCGKSFSQSYVLVVHQRTH), 437–459 (YECNQCGKSFRQSYKLIAHQRTH), 465–487 (YECNQCGKSFIQSYKLIAHQRIH), 493–515 (YECNQCGKSFSQSYKLVAHQRTH), 521–543 (FECNQCGKSFSWSSQLVAHQRTH), 549–571 (YECSECGKSFNRSSHLVMHQRIH), 577–599 (YECNQCGKSFSQSYVLVVHQRTH), 605–627 (YECSQCGKSFRQSSCLTQHQRTH), 633–655 (FECNQCGKTFSLSARLIVHQRTH), and 661–683 (FTCIQCGKAFINSYKLIRHQATH).

It belongs to the krueppel C2H2-type zinc-finger protein family.

The protein localises to the nucleus. Its function is as follows. May be involved in transcriptional regulation. This is Zinc finger protein 180 (ZNF180) from Homo sapiens (Human).